The chain runs to 231 residues: N-acetylmuramate alpha-1-phosphate uridylyltransferase (231 aa).

UTP contacts are provided by residues 11–13 and Lys-23; that span reads GER. Asn-106 lines the substrate pocket. Asp-108 is a Mg(2+) binding site. Residues Asp-146 and Asp-213 each coordinate substrate. Asp-213 serves as a coordination point for Mg(2+).

This sequence belongs to the nucleotidyltransferase MurU family. Monomer. It depends on Mg(2+) as a cofactor.

The enzyme catalyses N-acetyl-alpha-D-muramate 1-phosphate + UDP + H(+) = UDP-N-acetyl-alpha-D-muramate + phosphate. It participates in cell wall biogenesis; peptidoglycan recycling. Its function is as follows. Catalyzes the formation of UDP-N-acetylmuramate (UDP-MurNAc), a crucial precursor of the bacterial peptidoglycan cell wall, from UTP and MurNAc-alpha-1P. Is likely involved in peptidoglycan recycling as part of a cell wall recycling pathway that bypasses de novo biosynthesis of the peptidoglycan precursor UDP-MurNAc. Is able to complement the fosfomycin sensitivity phenotype of a P.putida mutant lacking murU. The protein is N-acetylmuramate alpha-1-phosphate uridylyltransferase of Neisseria meningitidis serogroup B (strain ATCC BAA-335 / MC58).